Reading from the N-terminus, the 366-residue chain is Palmitoyltransferase ZDHHC2 (366 aa).

The Cytoplasmic segment spans residues 1–15 (MAPSGSGGVRRRCRR). Residues 16–36 (VLYWIPVVFISLLLGWSYYAY) form a helical membrane-spanning segment. At 37–47 (AIQLCIVSMEN) the chain is on the lumenal side. Residues 48 to 68 (IGEQVVCLMAYHLLFAMFVWS) traverse the membrane as a helical segment. The Cytoplasmic segment spans residues 69–169 (YWKTIFTLPM…NNCVGFSNYK (101 aa)). In terms of domain architecture, DHHC spans 126–176 (RYCDRCQLIKPDRCHHCSVCDKCILKMDHHCPWVNNCVGFSNYKFFLLFLA). The S-palmitoyl cysteine intermediate role is filled by Cys156. Residues 170-190 (FFLLFLAYSLLYCLFIAATDL) traverse the membrane as a helical segment. The Lumenal segment spans residues 191 to 207 (QYFIRFWTNGLPDTQAK). A helical transmembrane segment spans residues 208–228 (FHIMFLFFAAAMFSVSLSSLF). Over 229–366 (GYHCWLVSKN…NPALTMENET (138 aa)) the chain is Cytoplasmic. A compositionally biased stretch (polar residues) spans 297–316 (VNQDPEQPSTPAGLNSTVKN). A disordered region spans residues 297 to 366 (VNQDPEQPST…NPALTMENET (70 aa)). The interval 298–366 (NQDPEQPSTP…NPALTMENET (69 aa)) is mediates localization to plasma membrane and recycling endosomes. The span at 326-336 (PLRESQSHLLK) shows a compositional bias: basic and acidic residues. The Non-canonical dileucine endocytic signal motif lies at 334–335 (LL). Positions 337-347 (DSQTWTESSAN) are enriched in polar residues. The short motif at 357–360 (NPAL) is the NPxY-like endocytic signal element.

The protein belongs to the DHHC palmitoyltransferase family. As to quaternary structure, monomer. Homodimer. The monomeric form has a higher catalytic activity. In terms of processing, autopalmitoylated. In terms of tissue distribution, expressed in all brain regions.

The protein resides in the postsynaptic density. It is found in the postsynaptic recycling endosome membrane. It localises to the cell membrane. Its subcellular location is the endoplasmic reticulum membrane. The protein localises to the golgi apparatus membrane. The catalysed reaction is L-cysteinyl-[protein] + hexadecanoyl-CoA = S-hexadecanoyl-L-cysteinyl-[protein] + CoA. It catalyses the reaction L-cysteinyl-[protein] + tetradecanoyl-CoA = S-tetradecanoyl-L-cysteinyl-[protein] + CoA. It carries out the reaction L-cysteinyl-[protein] + octadecanoyl-CoA = S-octadecanoyl-L-cysteinyl-[protein] + CoA. In terms of biological role, palmitoyltransferase that catalyzes the addition of palmitate onto various protein substrates and is involved in a variety of cellular processes. Has no stringent fatty acid selectivity and in addition to palmitate can also transfer onto target proteins myristate from tetradecanoyl-CoA and stearate from octadecanoyl-CoA. In the nervous system, plays a role in long term synaptic potentiation by palmitoylating AKAP5 through which it regulates protein trafficking from the dendritic recycling endosomes to the plasma membrane and controls both structural and functional plasticity at excitatory synapses. In dendrites, mediates the palmitoylation of DLG4 when synaptic activity decreases and induces synaptic clustering of DLG4 and associated AMPA-type glutamate receptors. Also mediates the de novo and turnover palmitoylation of RGS7BP, a shuttle for Gi/o-specific GTPase-activating proteins/GAPs, promoting its localization to the plasma membrane in response to the activation of G protein-coupled receptors. Through the localization of these GTPase-activating proteins/GAPs, it also probably plays a role in G protein-coupled receptors signaling in neurons. Also probably plays a role in cell adhesion by palmitoylating CD9 and CD151 to regulate their expression and function. Palmitoylates the endoplasmic reticulum protein CKAP4 and regulates its localization to the plasma membrane. Could also palmitoylate LCK and regulate its localization to the plasma membrane. In Mus musculus (Mouse), this protein is Palmitoyltransferase ZDHHC2.